A 224-amino-acid polypeptide reads, in one-letter code: MQTLARLFGQSPFAPLQAHLEMVVSCVEYMLPIFTALRDGRYEELLEMAKLVSDKEYQADCIKNDMRNHLPAGLFMPISRAGILEIISIQDSIADTAEDVAILLTIRRLNFYPSMETLFFRFLEKNLEAFELTMTLLHEFNQLLESSFGGRKADKARLLVGRVAKSEHESDVLQRELMQIFFSDDFIIPEKEFYLWLQVIRRTAGISDSSEKLAHRINMTLEEK.

The protein belongs to the UPF0111 family.

This chain is UPF0111 protein CPn_0681/CP_0066/CPj0681/CpB0708, found in Chlamydia pneumoniae (Chlamydophila pneumoniae).